Consider the following 532-residue polypeptide: Bifunctional purine biosynthesis protein PurH (532 aa).

One can recognise an MGS-like domain in the interval 1-149 (MTDPAPLTRA…KNHGAVTVLT (149 aa)).

It belongs to the PurH family.

The catalysed reaction is (6R)-10-formyltetrahydrofolate + 5-amino-1-(5-phospho-beta-D-ribosyl)imidazole-4-carboxamide = 5-formamido-1-(5-phospho-D-ribosyl)imidazole-4-carboxamide + (6S)-5,6,7,8-tetrahydrofolate. It catalyses the reaction IMP + H2O = 5-formamido-1-(5-phospho-D-ribosyl)imidazole-4-carboxamide. It functions in the pathway purine metabolism; IMP biosynthesis via de novo pathway; 5-formamido-1-(5-phospho-D-ribosyl)imidazole-4-carboxamide from 5-amino-1-(5-phospho-D-ribosyl)imidazole-4-carboxamide (10-formyl THF route): step 1/1. The protein operates within purine metabolism; IMP biosynthesis via de novo pathway; IMP from 5-formamido-1-(5-phospho-D-ribosyl)imidazole-4-carboxamide: step 1/1. The protein is Bifunctional purine biosynthesis protein PurH of Jannaschia sp. (strain CCS1).